The following is a 662-amino-acid chain: Junctophilin-1 (662 aa).

Over 1–640 the chain is Cytoplasmic; the sequence is MTGGRFDFDD…EREANSGPNS (640 aa). 5 MORN repeats span residues 14–36, 38–59, 60–82, 106–128, and 129–151; these read YCGG…KGQG, YSGS…SGNT, YQGY…KWMY, YEGT…DGGT, and YQGQ…PYGM. Phosphoserine occurs at positions 157, 216, and 220. Positions 228–247 are disordered; it reads SKSSISSKRSSVRSDAAMSR. MORN repeat units lie at residues 281–303 and 304–326; these read YMGE…NGMK and YEGE…DGSK. The span at 432 to 443 shows a compositional bias: basic and acidic residues; it reads VDAKENPEEKVP. Residues 432–634 form a disordered region; sequence VDAKENPEEK…DSCPSMEREA (203 aa). The residue at position 448 (threonine 448) is a Phosphothreonine. Serine 452 is modified (phosphoserine). A Phosphothreonine modification is found at threonine 461. Serine 465, serine 469, and serine 475 each carry phosphoserine. Residues 584-599 are compositionally biased toward low complexity; the sequence is KPSPNKWSPPKSVTKP. Basic and acidic residues predominate over residues 600–614; sequence VAKESKAEPKAKKSE. A helical; Anchor for type IV membrane protein transmembrane segment spans residues 641 to 661; the sequence is VMIVLVMLLNIGLAILFVHFL.

It belongs to the junctophilin family.

Its subcellular location is the cell membrane. It localises to the endoplasmic reticulum membrane. The protein localises to the sarcoplasmic reticulum membrane. Functionally, junctophilins contribute to the formation of junctional membrane complexes (JMCs) which link the plasma membrane with the endoplasmic or sarcoplasmic reticulum in excitable cells. Provides a structural foundation for functional cross-talk between the cell surface and intracellular calcium release channels. JPH1 contributes to the construction of the skeletal muscle triad by linking the t-tubule (transverse-tubule) and SR (sarcoplasmic reticulum) membranes. In Oryctolagus cuniculus (Rabbit), this protein is Junctophilin-1 (JPH1).